The chain runs to 352 residues: Nicotinate-nucleotide--dimethylbenzimidazole phosphoribosyltransferase (352 aa).

Catalysis depends on Glu-318, which acts as the Proton acceptor.

It belongs to the CobT family.

The catalysed reaction is 5,6-dimethylbenzimidazole + nicotinate beta-D-ribonucleotide = alpha-ribazole 5'-phosphate + nicotinate + H(+). Its pathway is nucleoside biosynthesis; alpha-ribazole biosynthesis; alpha-ribazole from 5,6-dimethylbenzimidazole: step 1/2. Its function is as follows. Catalyzes the synthesis of alpha-ribazole-5'-phosphate from nicotinate mononucleotide (NAMN) and 5,6-dimethylbenzimidazole (DMB). This Dehalococcoides mccartyi (strain CBDB1) protein is Nicotinate-nucleotide--dimethylbenzimidazole phosphoribosyltransferase.